Reading from the N-terminus, the 157-residue chain is Probable succinate transporter subunit YjjB (157 aa).

A run of 4 helical transmembrane segments spans residues 8–28, 50–70, 87–107, and 129–149; these read LALAQDMILAAIPAVGFAMVF, MILMTSGLNIEWSTFMASMLV, VFTVAAVIPMFPGISAYTAMI, and FLTASSIVGALSIGLSIPGLW.

Belongs to the ThrE exporter (TC 2.A.79) family. As to quaternary structure, the transporter is composed of YjjB and YjjP.

It is found in the cell inner membrane. Its function is as follows. Involved in succinate export with YjjP. Both proteins are required for export. In Escherichia coli O127:H6 (strain E2348/69 / EPEC), this protein is Probable succinate transporter subunit YjjB.